Consider the following 335-residue polypeptide: Dihydroorotate dehydrogenase (quinone) (335 aa).

Residues 58 to 62 (AGADK) and Thr-82 contribute to the FMN site. Lys-62 serves as a coordination point for substrate. 107-111 (NRNGF) is a substrate binding site. Positions 135 and 168 each coordinate FMN. Substrate is bound at residue Asn-168. Catalysis depends on Ser-171, which acts as the Nucleophile. Asn-173 is a binding site for substrate. Residues Lys-213 and Gly-241 each contribute to the FMN site. 242–243 (NT) contacts substrate. Residues Gly-264, Gly-293, and 314 to 315 (YS) contribute to the FMN site.

Belongs to the dihydroorotate dehydrogenase family. Type 2 subfamily. As to quaternary structure, monomer. Requires FMN as cofactor.

Its subcellular location is the cell membrane. The catalysed reaction is (S)-dihydroorotate + a quinone = orotate + a quinol. It functions in the pathway pyrimidine metabolism; UMP biosynthesis via de novo pathway; orotate from (S)-dihydroorotate (quinone route): step 1/1. Its function is as follows. Catalyzes the conversion of dihydroorotate to orotate with quinone as electron acceptor. The chain is Dihydroorotate dehydrogenase (quinone) from Haemophilus ducreyi (strain 35000HP / ATCC 700724).